Consider the following 336-residue polypeptide: Ornithine carbamoyltransferase, catabolic (336 aa).

Carbamoyl phosphate contacts are provided by residues 57 to 60 (STRT), Gln84, Arg108, and 135 to 138 (HPTQ). Residues Asn168, Asp232, and 236-237 (SM) each bind L-ornithine. Residues 274 to 275 (CL) and Arg321 contribute to the carbamoyl phosphate site.

The protein belongs to the aspartate/ornithine carbamoyltransferase superfamily. OTCase family.

It is found in the cytoplasm. It catalyses the reaction carbamoyl phosphate + L-ornithine = L-citrulline + phosphate + H(+). Its pathway is amino-acid degradation; L-arginine degradation via ADI pathway; carbamoyl phosphate from L-arginine: step 2/2. Its function is as follows. Reversibly catalyzes the transfer of the carbamoyl group from carbamoyl phosphate (CP) to the N(epsilon) atom of ornithine (ORN) to produce L-citrulline. This chain is Ornithine carbamoyltransferase, catabolic, found in Burkholderia pseudomallei (strain K96243).